Reading from the N-terminus, the 299-residue chain is NEDD8-activating enzyme E1 catalytic subunit (299 aa).

12–37 lines the ATP pocket; sequence GLGCEILKNLTMLSFVKQVHIVDIDT. Cys168 serves as the catalytic Glycyl thioester intermediate.

This sequence belongs to the ubiquitin-activating E1 family. UBA3 subfamily. In terms of assembly, heterodimer of UBA3 and ULA1. Interacts with NEDD8 and UBC12.

The catalysed reaction is ATP + [NEDD8 protein] + [E1 NEDD8-activating enzyme]-L-cysteine = AMP + diphosphate + [E1 NEDD8-activating enzyme]-S-[NEDD8 protein]-yl-L-cysteine.. The protein operates within protein modification; protein neddylation. Functionally, catalytic subunit of the dimeric UBA3-ULA1 E1 enzyme. E1 activates NEDD8/RUB1 by first adenylating its C-terminal glycine residue with ATP, thereafter linking this residue to the side chain of the catalytic cysteine, yielding a NEDD8-UBA3 thioester and free AMP. E1 finally transfers NEDD8 to the catalytic cysteine of UBC12. The protein is NEDD8-activating enzyme E1 catalytic subunit (UBA3) of Saccharomyces cerevisiae (strain ATCC 204508 / S288c) (Baker's yeast).